The sequence spans 523 residues: Peptidyl-prolyl cis-trans isomerase 4 (523 aa).

In terms of domain architecture, U-box spans 38 to 111; it reads KRLPINHCSL…GKFRCPVTFR (74 aa). In terms of domain architecture, PPIase cyclophilin-type spans 278–433; sequence KNAFVRLVTN…VSVVIMRAEV (156 aa).

Belongs to the cyclophilin-type PPIase family. PPIL2 subfamily. Interacts with mep-1. Exclusively in the larval body wall striated muscle cells.

Its subcellular location is the nucleus. The enzyme catalyses [protein]-peptidylproline (omega=180) = [protein]-peptidylproline (omega=0). It carries out the reaction S-ubiquitinyl-[E2 ubiquitin-conjugating enzyme]-L-cysteine + [acceptor protein]-L-lysine = [E2 ubiquitin-conjugating enzyme]-L-cysteine + N(6)-ubiquitinyl-[acceptor protein]-L-lysine.. It functions in the pathway protein modification; protein ubiquitination. Its function is as follows. May catalyze the cis-trans isomerization of proline imidic peptide bonds in oligopeptides thereby assisting the folding of proteins. May also function as a chaperone, playing a role in intracellular transport of proteins. May also have a protein ubiquitin ligase activity acting as an E3 ubiquitin protein ligase or as a ubiquitin-ubiquitin ligase promoting elongation of ubiquitin chains on proteins. Influences the hermaphrodite switch from spermatogenesis to oogenesis. Required for body wall muscle cell development. This chain is Peptidyl-prolyl cis-trans isomerase 4 (cyn-4), found in Caenorhabditis elegans.